An 828-amino-acid polypeptide reads, in one-letter code: MSGSIRRSYTAMQNFPRFLLGVLFVATLSSCRPRLSEDEANWKGQTETSEVEEHLLLDPGNALRLFCDTNQSSSINWYREQERLLSGGKIRMVGTVLEVSDVTYEDSGLYICVVRGTGKILRRFSISVVDSLASGDEEEEEEDDDDEDGRREDTTADINEEPVYFFQAPYWTQPSRMDKKLHAVPAGNTVKFRCPAGGSPLPTIRWSLKNGREFRGEHRIGGIQIRHQHWSLVMESVVPSDRGNYTCVVENRVGSLTYTYFLDVLERSSHRPILQAGLPANTTARVGSDVEFYCKVYSDAQPHIQWLKHIEVNGSHFGPDDFPYVQVLKTADINPSDVEVLHLRNITMEDAGEYTCLAGNSIGLSHQSAWLTVLPNEDFLEQAEPAESRYMDIIIYTSGFLAVAMAIMIVILCRMQTPHSKQTLQTPTVHKLAKFPLIRQFSLESSSSGKSSAPLIRITRLSSSCAPMLPGVMEVELPLDAKWEFPRDRLVLGKPLGEGCFGQVVRAEGYGIEKDRPEKPVTVAVKMLKDNGTDKDLSDLISEMELMKVIGKHKNIINLLGVCTQEGPLFVIVEYASKGNLREFLRARRPPTPEDAFDITKVPEELLSFKDLVSCAYQVARGMEYLESKRCIHRDLAARNVLVAEDNVMKIADFGLARGVHDIDYYKKTSNGRLPVKWMAPEALFDRVYTHQSDIWSFGVLTWEIFTLGGSPYPVIPYEELFKLLREGHRMDKPSNCTHELYMLMRECWHAVPTQRPTFKQLEHLDRILTAVSEEYLDLSMPFEQYSPSCEDSASTCSSSDDSVFAPDPVPSSPCVFNYHNIHSQLGT.

Positions 1-31 are cleaved as a signal peptide; sequence MSGSIRRSYTAMQNFPRFLLGVLFVATLSSC. Over 32–392 the chain is Extracellular; the sequence is RPRLSEDEAN…AEPAESRYMD (361 aa). Residues 33 to 127 enclose the Ig-like C2-type 1 domain; that stretch reads PRLSEDEANW…GKILRRFSIS (95 aa). The cysteines at positions 67 and 112 are disulfide-linked. A glycan (N-linked (GlcNAc...) asparagine) is linked at Asn-70. Residues 132–156 are disordered; the sequence is LASGDEEEEEEDDDDEDGRREDTTA. Over residues 135–147 the composition is skewed to acidic residues; that stretch reads GDEEEEEEDDDDE. 2 Ig-like C2-type domains span residues 169–259 and 272–372; these read PYWT…LTYT and PILQ…AWLT. A disulfide bridge links Cys-194 with Cys-247. Residues Asn-244, Asn-281, Asn-313, and Asn-345 are each glycosylated (N-linked (GlcNAc...) asparagine). Residues Cys-294 and Cys-356 are joined by a disulfide bond. The helical transmembrane segment at 393–413 threads the bilayer; that stretch reads IIIYTSGFLAVAMAIMIVILC. Over 414–828 the chain is Cytoplasmic; sequence RMQTPHSKQT…YHNIHSQLGT (415 aa). The region spanning 490–777 is the Protein kinase domain; sequence LVLGKPLGEG…ILTAVSEEYL (288 aa). ATP-binding positions include 496–504 and Lys-526; that span reads LGEGCFGQV. Asp-635 (proton acceptor) is an active-site residue. Phosphotyrosine; by autocatalysis occurs at positions 665, 666, and 776.

It belongs to the protein kinase superfamily. Tyr protein kinase family. Fibroblast growth factor receptor subfamily. Ubiquitinated. Subject to proteasomal degradation when not fully glycosylated. Post-translationally, autophosphorylated. Binding of FGF family members together with heparan sulfate proteoglycan or heparin promotes receptor dimerization and autophosphorylation on tyrosine residues. Autophosphorylation occurs in trans between the two FGFR molecules present in the dimer.

It is found in the cell membrane. The protein resides in the endosome. The protein localises to the endoplasmic reticulum. It catalyses the reaction L-tyrosyl-[protein] + ATP = O-phospho-L-tyrosyl-[protein] + ADP + H(+). With respect to regulation, present in an inactive conformation in the absence of bound ligand. Ligand binding leads to dimerization and activation by autophosphorylation on tyrosine residues. Functionally, tyrosine-protein kinase that acts as a cell-surface receptor for fibroblast growth factors and plays a role in the regulation of cell proliferation, differentiation and migration, and in regulation of lipid metabolism, bile acid biosynthesis, glucose uptake, vitamin D metabolism and phosphate homeostasis. Required for normal down-regulation of the expression of CYP7A1, the rate-limiting enzyme in bile acid synthesis, in response to FGF19. Phosphorylates PLCG1 and FRS2. Ligand binding leads to the activation of several signaling cascades. Activation of PLCG1 leads to the production of the cellular signaling molecules diacylglycerol and inositol 1,4,5-trisphosphate. Phosphorylation of FRS2 triggers recruitment of GRB2, GAB1, PIK3R1 and SOS1, and mediates activation of RAS, MAPK1/ERK2, MAPK3/ERK1 and the MAP kinase signaling pathway, as well as of the AKT1 signaling pathway. The chain is Fibroblast growth factor receptor 4 (fgfr4) from Xenopus laevis (African clawed frog).